Consider the following 444-residue polypeptide: Ribosomal protein uS12 methylthiotransferase RimO (444 aa).

The 117-residue stretch at 1 to 117 (MKVGIISLGC…ITEVISSALK (117 aa)) folds into the MTTase N-terminal domain. 6 residues coordinate [4Fe-4S] cluster: cysteine 10, cysteine 46, cysteine 80, cysteine 154, cysteine 158, and cysteine 161. Residues 140–370 (YQPGPSAYIK…WEVQKEITRK (231 aa)) form the Radical SAM core domain. In terms of domain architecture, TRAM spans 373-441 (EGLVGTEMRV…DYDLIGEMTN (69 aa)).

It belongs to the methylthiotransferase family. RimO subfamily. The cofactor is [4Fe-4S] cluster.

It localises to the cytoplasm. The catalysed reaction is L-aspartate(89)-[ribosomal protein uS12]-hydrogen + (sulfur carrier)-SH + AH2 + 2 S-adenosyl-L-methionine = 3-methylsulfanyl-L-aspartate(89)-[ribosomal protein uS12]-hydrogen + (sulfur carrier)-H + 5'-deoxyadenosine + L-methionine + A + S-adenosyl-L-homocysteine + 2 H(+). Catalyzes the methylthiolation of an aspartic acid residue of ribosomal protein uS12. The polypeptide is Ribosomal protein uS12 methylthiotransferase RimO (Natranaerobius thermophilus (strain ATCC BAA-1301 / DSM 18059 / JW/NM-WN-LF)).